Here is a 309-residue protein sequence, read N- to C-terminus: Homoserine kinase (309 aa).

An ATP-binding site is contributed by 91-101 (PVGSGLGSSAC).

This sequence belongs to the GHMP kinase family. Homoserine kinase subfamily.

The protein localises to the cytoplasm. It carries out the reaction L-homoserine + ATP = O-phospho-L-homoserine + ADP + H(+). Its pathway is amino-acid biosynthesis; L-threonine biosynthesis; L-threonine from L-aspartate: step 4/5. In terms of biological role, catalyzes the ATP-dependent phosphorylation of L-homoserine to L-homoserine phosphate. This Hamiltonella defensa subsp. Acyrthosiphon pisum (strain 5AT) protein is Homoserine kinase.